Here is a 969-residue protein sequence, read N- to C-terminus: MTESPTAGPGGVPRADDADSDVPRYRYTAELAARLERTWQENWARLGTFNVPNPVGSLAPPDGAAVPDDKLFVQDMFPYPSGEGLHVGHPLGYIATDVYARYFRMVGRNVLHALGFDAFGLPAEQYAVQTGTHPRTRTEANVVNFRRQLGRLGFGHDSRRSFSTTDVDFYRWTQWIFLQIYNAWFDTTANKARPISELVAEFESGARCLDGGRDWAKLTAGERADVIDEYRLVYRADSLVNWCPGLGTVLANEEVTADGRSDRGNFPVFRKRLRQWMMRITAYADRLLDDLDVLDWPEQVKTMQRNWIGRSTGAVALFSARAASDDGFEVDIEVFTTRPDTLFGATYLVLAPEHDLVDELVAASWPAGVNPLWTYGGGTPGEAIAAYRRAIAAKSDLERQESREKTGVFLGSYAINPANGEPVPIFIADYVLAGYGTGAIMAVPGHDQRDWDFARAFGLPIVEVIAGGNISESAYTGDGILVNSDYLNGMSVPAAKRAIVDRLESAGRGRARIEFKLRDWLFARQRYWGEPFPIVYDSDGRPHALDEAALPVELPDVPDYSPVLFDPDDADSEPSPPLAKATEWVHVDLDLGDGLKPYSRDTNVMPQWAGSSWYELRYTDPHNSERFCAKENEAYWMGPRPAEHGPDDPGGVDLYVGGAEHAVLHLLYSRFWHKVLYDLGHVSSREPYRRLVNQGYIQAYAYTDARGSYVPAEQVIERGDRFVYPGPDGEVEVFQEFGKIGKSLKNSVSPDEICDAYGADTLRVYEMSMGPLEASRPWATKDVVGAYRFLQRVWRLVVDEHTGETRVADGVELDIDTLRALHRTIVGVSEDFAALRNNTATAKLIEYTNHLTKKHRDAVPRAAVEPLVQMLAPLAPHIAEELWLRLGNTTSLAHGPFPKADAAYLVDETVEYPVQVNGKVRGRVVVAADTDEETLKAAVLTDEKVQAFLAGATPRKVIVVAGRLVNLVI.

The 'HIGH' region motif lies at 78 to 89 (PYPSGEGLHVGH). The 'KMSKS' region motif lies at 739–743 (KIGKS). Lysine 742 contacts ATP.

Belongs to the class-I aminoacyl-tRNA synthetase family.

Its subcellular location is the cytoplasm. It catalyses the reaction tRNA(Leu) + L-leucine + ATP = L-leucyl-tRNA(Leu) + AMP + diphosphate. The polypeptide is Leucine--tRNA ligase (Mycobacterium tuberculosis (strain ATCC 25177 / H37Ra)).